Consider the following 73-residue polypeptide: uncharacterized protein (73 aa).

This is an uncharacterized protein from Methanocaldococcus jannaschii (strain ATCC 43067 / DSM 2661 / JAL-1 / JCM 10045 / NBRC 100440) (Methanococcus jannaschii).